A 581-amino-acid polypeptide reads, in one-letter code: Urease subunit alpha (581 aa).

The Urease domain maps to 134-581; that stretch reads GGFDSHIHFI…LPMTQRYFLF (448 aa). Residues His-139, His-141, and Lys-222 each contribute to the Ni(2+) site. Lys-222 is subject to N6-carboxylysine. His-224 serves as a coordination point for substrate. Ni(2+) contacts are provided by His-251 and His-277. Residue His-325 is the Proton donor of the active site. Position 365 (Asp-365) interacts with Ni(2+).

It belongs to the metallo-dependent hydrolases superfamily. Urease alpha subunit family. As to quaternary structure, heterotrimer of UreA (gamma), UreB (beta) and UreC (alpha) subunits. Three heterotrimers associate to form the active enzyme. Requires Ni cation as cofactor. Carboxylation allows a single lysine to coordinate two nickel ions.

It localises to the cytoplasm. It carries out the reaction urea + 2 H2O + H(+) = hydrogencarbonate + 2 NH4(+). Its pathway is nitrogen metabolism; urea degradation; CO(2) and NH(3) from urea (urease route): step 1/1. This is Urease subunit alpha from Albidiferax ferrireducens (strain ATCC BAA-621 / DSM 15236 / T118) (Rhodoferax ferrireducens).